The chain runs to 101 residues: Small ribosomal subunit protein uS14 (101 aa).

The protein belongs to the universal ribosomal protein uS14 family. Part of the 30S ribosomal subunit. Contacts proteins S3 and S10.

In terms of biological role, binds 16S rRNA, required for the assembly of 30S particles and may also be responsible for determining the conformation of the 16S rRNA at the A site. This Idiomarina loihiensis (strain ATCC BAA-735 / DSM 15497 / L2-TR) protein is Small ribosomal subunit protein uS14.